Here is a 499-residue protein sequence, read N- to C-terminus: Importin subunit alpha-8 (499 aa).

Positions 1–57 (MATSKAPKERLKNYKYRGKEMSLPRQQRIASSLQLRKTRKDEQVLKRRNIDLFSSDM) constitute an IBB domain. 8 ARM repeats span residues 101–141 (TPPL…NIAS), 144–183 (SEQT…NIAG), 186–226 (AEFR…NLCR), 229–268 (DPYP…YLTK), 271–310 (KEYI…NIVA), 313–352 (DEQT…NVAA), 354–393 (PRHQ…NIAT), and 397–436 (QDQL…YLLQ).

Belongs to the importin alpha family. Binds to importin subunit beta-1/KPNB1 via the IBB domain; this complex dissociates in the presence of RAN-GTP. Shows a limited binding to the RB1 nuclear localization signal (NLS), but not to the SV40, nor NPM1 NLSs. Interacts with RSL1D1. In terms of tissue distribution, expressed predominantly in ovary. Isoform 1 is the predominant form.

It is found in the nucleus. In terms of biological role, functions in nuclear protein import. This chain is Importin subunit alpha-8 (Kpna7), found in Mus musculus (Mouse).